We begin with the raw amino-acid sequence, 320 residues long: Short-chain dehydrogenase/reductase ATR7 (320 aa).

Positions 32, 34, 55, 70, 93, 134, 167, 171, and 202 each coordinate NADP(+). The active-site Proton acceptor is the tyrosine 167. Lysine 171 serves as the catalytic Lowers pKa of active site Tyr.

Belongs to the short-chain dehydrogenases/reductases (SDR) family.

The protein operates within mycotoxin biosynthesis. Short-chain dehydrogenase/reductase; part of the core atranone cluster (CAC) which products are predicted to catalyze most or all steps of mycotoxin atranone synthesis, starting from geranylgeranyl pyrophosphate (GGPP). The initial cyclization of GGPP to dolabellane is probably performed by the terpene cyclase ATR13. The Baeyer-Villiger oxidation near the end of the atranone synthesis, which converts atranones D and E to atranones F and G is predicted to be catalyzed by the monooxygenase ATR8. Of the CAC's other predicted gene products, the reducing PKS ATR6 might synthesize a polyketide chain. This polyketide is probably transferred onto the atranone backbone by the polyketide transferase ATR5. Other predicted CAC products include 4 oxygenases (ATR2, ATR3, ATR4, and ATR14), 3 short-chain reductases (ATR7, ATR9, and ATR10), and a methyltransferase (ATR12). These may all be involved in the various steps of atranone biosynthesis, although their specific roles must await experimental determination. This Stachybotrys chlorohalonatus (strain IBT 40285) protein is Short-chain dehydrogenase/reductase ATR7.